Reading from the N-terminus, the 109-residue chain is Parvalbumin alpha (109 aa).

2 EF-hand domains span residues 38–73 (KTDA…FSAH) and 77–109 (LNDT…VAQA). The Ca(2+) site is built by Asp51, Asp53, Ser55, Glu62, Asp90, Asp92, Asp94, Lys96, and Glu101.

It belongs to the parvalbumin family.

In terms of biological role, in muscle, parvalbumin is thought to be involved in relaxation after contraction. It binds two calcium ions. The chain is Parvalbumin alpha from Triakis semifasciata (Leopard shark).